The primary structure comprises 289 residues: Oxaloacetate decarboxylase (289 aa).

Ser-50 lines the substrate pocket. Asp-88 contacts Mg(2+). 2 residues coordinate substrate: Arg-159 and His-235.

This sequence belongs to the isocitrate lyase/PEP mutase superfamily. Oxaloacetate decarboxylase family. As to quaternary structure, homotetramer; dimer of dimers. Mg(2+) serves as cofactor.

It catalyses the reaction oxaloacetate + H(+) = pyruvate + CO2. Catalyzes the decarboxylation of oxaloacetate into pyruvate. Seems to play a role in maintaining cellular concentrations of bicarbonate and pyruvate. The sequence is that of Oxaloacetate decarboxylase from Pseudomonas entomophila (strain L48).